Here is an 89-residue protein sequence, read N- to C-terminus: UPF0367 protein MAE_19160 (89 aa).

This sequence belongs to the UPF0367 family.

In Microcystis aeruginosa (strain NIES-843 / IAM M-2473), this protein is UPF0367 protein MAE_19160.